A 119-amino-acid chain; its full sequence is Holo-[acyl-carrier-protein] synthase (119 aa).

Mg(2+) is bound by residues Asp8 and Glu59.

This sequence belongs to the P-Pant transferase superfamily. AcpS family. Mg(2+) is required as a cofactor.

The protein resides in the cytoplasm. The enzyme catalyses apo-[ACP] + CoA = holo-[ACP] + adenosine 3',5'-bisphosphate + H(+). Functionally, transfers the 4'-phosphopantetheine moiety from coenzyme A to a Ser of acyl-carrier-protein. This chain is Holo-[acyl-carrier-protein] synthase, found in Lactococcus lactis subsp. lactis (strain IL1403) (Streptococcus lactis).